We begin with the raw amino-acid sequence, 659 residues long: Threonine--tRNA ligase (659 aa).

Residues 7–70 (VQATVTVTFP…TDDATVEIIT (64 aa)) form the TGS domain. Residues 255–557 (DHRKLGAELE…LIEHTAGNFP (303 aa)) are catalytic. The Zn(2+) site is built by Cys-353, His-404, and His-534.

The protein belongs to the class-II aminoacyl-tRNA synthetase family. Homodimer. Zn(2+) serves as cofactor.

It localises to the cytoplasm. It catalyses the reaction tRNA(Thr) + L-threonine + ATP = L-threonyl-tRNA(Thr) + AMP + diphosphate + H(+). In terms of biological role, catalyzes the attachment of threonine to tRNA(Thr) in a two-step reaction: L-threonine is first activated by ATP to form Thr-AMP and then transferred to the acceptor end of tRNA(Thr). Also edits incorrectly charged L-seryl-tRNA(Thr). In Chlorobium phaeobacteroides (strain BS1), this protein is Threonine--tRNA ligase.